The sequence spans 65 residues: SPbeta prophage-derived uncharacterized protein YorO (65 aa).

The chain is SPbeta prophage-derived uncharacterized protein YorO (yorO) from Bacillus subtilis (strain 168).